We begin with the raw amino-acid sequence, 546 residues long: Nicotinic acid-CoA ligase olcI (546 aa).

194–205 (MFSTSGTSGLPK) contacts AMP. Positions 445 to 523 (EIEAVLLKDP…ESLPRTGIGK (79 aa)) are AMP-binding.

Belongs to the ATP-dependent AMP-binding enzyme family.

It carries out the reaction nicotinate + ATP + CoA = nicotinyl-CoA + AMP + diphosphate. The protein operates within secondary metabolite biosynthesis; terpenoid biosynthesis. In terms of biological role, nicotinic acid-CoA ligase; part of the gene cluster that mediates the biosynthesis of 15-deoxyoxalicine B. The first step of the pathway is the synthesis of nicotinyl-CoA from nicotinic acid by the nicotinic acid-CoA ligase olcI. Nicotinyl-CoA is then a substrate of polyketide synthase olcA to produce 4-hydroxy-6-(3-pyridinyl)-2H-pyran-2-one (HPPO) which is further prenylated by the polyprenyl transferase olcH to yield geranylgeranyl-HPPO. Geranylgeranyl pyrophosphate is provided by the cluster-specific geranylgeranyl pyrophosphate synthase olcC. The FAD-dependent monooxygenase olcE catalyzes the epoxidation of geranylgeranyl-HPPO and the terpene cyclase olcD catalyzes the cyclization of the terpenoid component, resulting in the formation of the tricyclic terpene moiety seen in predecaturin E. The cytochrome P450 monooxygenase then catalyzes the allylic oxidation of predecaturin E, which is followed by spirocylization with concomitant loss of one molecule of water to form decaturin E. Decaturin E is the substrate of the cytochrome P450 monooxygenase olcJ which hydroxylates it at the C-29 position to form decaturin F. The short-chain dehydrogenase/reductase olcF may catalyze the oxidation of decaturin F to generate the 29-hydroxyl-27-one intermediate, and subsequent hemiacetal formation probably leads to the formation of decaturin C. The dioxygenase olcK may be a peroxisomal enzyme that catalyzes the hydroxylation of decaturin C into decaturin A once decaturin C is shuttled into the peroxisome by the MFS transporter olcL. Finally the cytochrome P450 monooxygenase olcB catalyzes the oxidative rearrangement to yield 15-deoxyoxalicine B. In the absence of olcJ, decaturin E may be shunted to a pathway in which it is oxidized to a ketone, possibly by olcF, to form decaturin D, which undergoes further allylic oxidation to yield decaturin G. Moreover, in the absence of oclK or oclL, oclB can convert decaturin C into 15-deoxyoxalicine A. The protein is Nicotinic acid-CoA ligase olcI of Penicillium canescens.